The primary structure comprises 765 residues: Zinc transporter ZIP6 (765 aa).

The N-terminal stretch at 1–20 (MATDLSVIMILTFALWVTSP) is a signal peptide. At 21-335 (LHELQSTAAF…PKTYSLQIAW (315 aa)) the chain is on the extracellular side. Residue Asn68 is glycosylated (N-linked (GlcNAc...) asparagine). 2 stretches are compositionally biased toward basic and acidic residues: residues 96–135 (DHEH…DHEH) and 174–186 (RPAE…RNIK). Disordered regions lie at residues 96–196 (DHEH…EVTS) and 209–257 (VETI…SEPR). Low complexity predominate over residues 187 to 196 (ESASSSEVTS). Positions 224–233 (VNPSTPPSIT) are enriched in polar residues. Residues 238–247 (VGRLSRLARK) show a composition bias toward basic residues. Basic and acidic residues predominate over residues 248–257 (KSNESVSEPR). Residues Asn250, Asn275, and Asn292 are each glycosylated (N-linked (GlcNAc...) asparagine). Residues 336–356 (LGGFIAISIISFLSLLGVILV) form a helical membrane-spanning segment. Residues 357–365 (PLMNRVFFK) are Cytoplasmic-facing. A helical membrane pass occupies residues 366 to 386 (FLLSFLVALAVGTLSGDALLH). The Extracellular segment spans residues 387–433 (LLPHSHASHQHSHSHEEPAMEMKRGPLFSHLSAQNIEESSYFDSTWK). A helical membrane pass occupies residues 434–454 (GLTALGGLYFMFLVEHVLTLI). Residues 455-667 (KQFKDKKKKN…LKAGMTVKQA (213 aa)) are Cytoplasmic-facing. A disordered region spans residues 458–519 (KDKKKKNQKK…EPSPFDSQQP (62 aa)). Residues 475-495 (ESKKQLSKYDSQLSSNEEKVD) are a coiled coil. Ser481 and Ser488 each carry phosphoserine. The span at 490 to 508 (NEEKVDPGERPESYLRADS) shows a compositional bias: basic and acidic residues. Residues 509–519 (QEPSPFDSQQP) show a composition bias toward polar residues. A helical transmembrane segment spans residues 668-688 (VLYNALSAMLAYLGMATGIFI). Residues 689 to 696 (GHYAENVS) are Extracellular-facing. Asn694 carries an N-linked (GlcNAc...) asparagine glycan. Residues 697-717 (MWIFALTAGLFMYVALVDMVP) traverse the membrane as a helical segment. Topologically, residues 718 to 734 (EMLHNDASDHGCSRWGY) are cytoplasmic. The chain crosses the membrane as a helical span at residues 735–755 (FFLQNAGILLGFGIMLLISIF). The Extracellular portion of the chain corresponds to 756 to 765 (EHKIVFRINF).

This sequence belongs to the ZIP transporter (TC 2.A.5) family. Interacts with SLC39A10; which triggers cells to undergo EMT and mitosis. Found in a complex with SLC39A6, SLC39A10 and with the 'Ser-727' phosphorylated form of STAT3 throughout mitosis. Found in a complex with SLC39A6, SLC39A10 and with NCAM1; this complex controls NCAM1 phosphorylation and integration into focal adhesion complexes during epithelial-to-mesenchymal transition (EMT). Found in a complex with SLC39A6, SLC39A10 and with GSK3B that controls NCAM1 phosphorylation. Post-translationally, cleaved on the N-terminus before locating to the plasma membrane. In terms of processing, N-glycosylated. Phosphorylated by ZAP70 in response to TCR stimulation leading to its activation. In terms of tissue distribution, highly expressed in the brain and testis. In the brain strongly expressed in the CA1 and CA3 regions, Purkinje cells in cerebellum and dentate gyrus in hippocampus. In testis found in spermatids or mature sperms in the central areas of seminiferous tubules.

The protein resides in the cell membrane. It is found in the cell projection. It localises to the lamellipodium membrane. The protein localises to the membrane raft. Its subcellular location is the apical cell membrane. The catalysed reaction is Zn(2+)(in) = Zn(2+)(out). Zinc-influx transporter which plays a role in zinc homeostasis and in the induction of epithelial-to-mesenchymal transition (EMT). When associated with SLC39A10, the heterodimer formed by SLC39A10 and SLC39A6 mediates cellular zinc uptake to trigger cells to undergo epithelial- to-mesenchymal transition (EMT). The SLC39A10-SLC39A6 heterodimer also controls NCAM1 phosphorylation and its integration into focal adhesion complexes during EMT. Zinc influx inactivates GSK3B, enabling unphosphorylated SNAI1 in the nucleus to down-regulate adherence genes such as E-cadherin, causing loss of cell adherence. In addition, the SLC39A10-SLC39A6 heterodimer plays an essentiel role in initiating mitosis by importing zinc into cells to initiate a pathway resulting in the onset of mitosis. Participates in the T-cell receptor signaling regulation by mediating cellular zinc uptake into activated lymphocytes. Regulates the zinc influx necessary for proper meiotic progression to metaphase II (MII) that allows the oocyte-to-egg transition. The chain is Zinc transporter ZIP6 from Mus musculus (Mouse).